The following is a 540-amino-acid chain: Putative actin-fragmin kinase DDB_G0287957 (540 aa).

Residues 27–68 adopt a coiled-coil conformation; the sequence is KNENLNIKNEILNNNNNNNNNKNNNNNNNNNNNIENNSKNEN. Disordered stretches follow at residues 37–70 and 317–341; these read ILNN…ENFN and NNNN…INNC.

This sequence belongs to the protein kinase superfamily. AFK Ser/Thr protein kinase family.

The sequence is that of Putative actin-fragmin kinase DDB_G0287957 from Dictyostelium discoideum (Social amoeba).